The following is a 643-amino-acid chain: MTLLKTPLLDTIRDAADVRRLPQDKLAQLAAELRAETIDAVSVTGGHLGAGLGVVELTVALHHVFNTPHDRLIWDVGHQCYPHKILTGRRDRIRTLRQGGGLSGFTRRAESEYDPFGAAHSSTSISAGLGMAVARDLSGEERNVVCVIGDGAMSAGMAYEAMNNAGAMDSRLIVILNDNDMSIAPPTGAMSAYLARLISGQTYRSLREIGKQIAGHLPKFVERGAARAEEFARGFWTGGTLFEELGFYYVGPIDGHNLDHLLPVLKNVRDAKTGPILVHVVTQKGKGYAPAEASADKYHGVVKFDVVTGAQVKAKSNAPSYTRVFAESLISQARHDPKVVAITAAMPSGTGLDLFGQVYPERTFDVGIAEQHAVTFAAGLAAEGFKPFCALYSTFLQRAYDQVVHDVALQGLPVRFIIDRAGLVGADGATHAGAFDIAFLACLPGMTVMAPADEAELVHMMATMVAFDDGPSAVRFPRGEGVGVERPERGEVLPIGKGRIVHGTGEGDIALLSLGTRLAACLDAAERLEAAGFTVTVADARFAKPLDRELVLKLAAGHGALVTVEEGSVGGFGSHVLQLVTDEGLLDRGAVKVRAMVLPDIYIDQETQARQLAAAGLDADAIVAKVEGLLGKAKAGVSLHKAG.

Thiamine diphosphate-binding positions include His-78 and 119-121; that span reads AHS. Asp-150 provides a ligand contact to Mg(2+). Thiamine diphosphate is bound by residues 151–152, Asn-179, Tyr-288, and Glu-370; that span reads GA. A Mg(2+)-binding site is contributed by Asn-179.

It belongs to the transketolase family. DXPS subfamily. As to quaternary structure, homodimer. It depends on Mg(2+) as a cofactor. Thiamine diphosphate is required as a cofactor.

It catalyses the reaction D-glyceraldehyde 3-phosphate + pyruvate + H(+) = 1-deoxy-D-xylulose 5-phosphate + CO2. It functions in the pathway metabolic intermediate biosynthesis; 1-deoxy-D-xylulose 5-phosphate biosynthesis; 1-deoxy-D-xylulose 5-phosphate from D-glyceraldehyde 3-phosphate and pyruvate: step 1/1. Its function is as follows. Catalyzes the acyloin condensation reaction between C atoms 2 and 3 of pyruvate and glyceraldehyde 3-phosphate to yield 1-deoxy-D-xylulose-5-phosphate (DXP). The sequence is that of 1-deoxy-D-xylulose-5-phosphate synthase from Xanthobacter autotrophicus (strain ATCC BAA-1158 / Py2).